A 198-amino-acid chain; its full sequence is Recombination protein RecR (198 aa).

The segment at 57–72 (CSICGRLTDDDPCSIC) adopts a C4-type zinc-finger fold. The Toprim domain maps to 80–175 (TTILVLEDSR…KVTRLARGLA (96 aa)).

Belongs to the RecR family.

Its function is as follows. May play a role in DNA repair. It seems to be involved in an RecBC-independent recombinational process of DNA repair. It may act with RecF and RecO. The protein is Recombination protein RecR of Streptococcus pneumoniae (strain 70585).